A 315-amino-acid polypeptide reads, in one-letter code: Ribose-phosphate pyrophosphokinase (315 aa).

ATP is bound by residues 40 to 42 (DGE) and 99 to 100 (RQ). His-133 and Asp-175 together coordinate Mg(2+). The active site involves Lys-198. D-ribose 5-phosphate-binding positions include Arg-200, Asp-224, and 228–232 (DTAHS).

It belongs to the ribose-phosphate pyrophosphokinase family. Class I subfamily. In terms of assembly, homohexamer. Mg(2+) serves as cofactor.

The protein resides in the cytoplasm. The enzyme catalyses D-ribose 5-phosphate + ATP = 5-phospho-alpha-D-ribose 1-diphosphate + AMP + H(+). It functions in the pathway metabolic intermediate biosynthesis; 5-phospho-alpha-D-ribose 1-diphosphate biosynthesis; 5-phospho-alpha-D-ribose 1-diphosphate from D-ribose 5-phosphate (route I): step 1/1. In terms of biological role, involved in the biosynthesis of the central metabolite phospho-alpha-D-ribosyl-1-pyrophosphate (PRPP) via the transfer of pyrophosphoryl group from ATP to 1-hydroxyl of ribose-5-phosphate (Rib-5-P). The sequence is that of Ribose-phosphate pyrophosphokinase from Thermotoga maritima (strain ATCC 43589 / DSM 3109 / JCM 10099 / NBRC 100826 / MSB8).